Consider the following 311-residue polypeptide: Porphobilinogen deaminase (311 aa).

Cys-241 bears the S-(dipyrrolylmethanemethyl)cysteine mark.

It belongs to the HMBS family. In terms of assembly, monomer. It depends on dipyrromethane as a cofactor.

It catalyses the reaction 4 porphobilinogen + H2O = hydroxymethylbilane + 4 NH4(+). It participates in porphyrin-containing compound metabolism; protoporphyrin-IX biosynthesis; coproporphyrinogen-III from 5-aminolevulinate: step 2/4. In terms of biological role, tetrapolymerization of the monopyrrole PBG into the hydroxymethylbilane pre-uroporphyrinogen in several discrete steps. In Shouchella clausii (strain KSM-K16) (Alkalihalobacillus clausii), this protein is Porphobilinogen deaminase.